The following is a 498-amino-acid chain: MSNENHEELNDQLIVRREKVDTLREEGIDPFGEKFIRSISPEEIETKFADKSKEELEEAAIEVSVAGRIMTKRVKGKVGFTHIQDRFHQLQIYIRKDAIGEDAYAVFKLADLGDIIGIKGTIFRTNTGELSVKATEFTLLSKSLRPLPDKYHGLKDVEQRYRQRYLDLITNEESQNRFVMRSKILKYTRDYMDNQGFLEVETPVLHTIAGGAAAKPFITHHNALDMELYLRIALELHLKRLIVGGMDKVYEIGRVFRNEGTSTRHNPEFTMLESYAAYEDYEDVMDLVEGLVSTVCKQVNGTTEITYGEYKVDLTPNWRRIHMADAVKEYVGVDFWNVTSDEEARELAKKHDVPVTEHMTYGHILNEFFETYVEEKLIQPTFVYGHPVEISPLAKKNKEDERFTDRFELFIVGREHANAFSELNDPIDQRERFEAQMKEREQGNDEAHGMDADFLEALEYGLPPTGGLGIGIDRLVMLLTDAPSIRDILLFPTMKHRD.

Residues glutamate 408 and glutamate 415 each contribute to the Mg(2+) site.

It belongs to the class-II aminoacyl-tRNA synthetase family. In terms of assembly, homodimer. Requires Mg(2+) as cofactor.

It localises to the cytoplasm. It catalyses the reaction tRNA(Lys) + L-lysine + ATP = L-lysyl-tRNA(Lys) + AMP + diphosphate. The protein is Lysine--tRNA ligase of Listeria monocytogenes serovar 1/2a (strain ATCC BAA-679 / EGD-e).